The sequence spans 860 residues: Probable leucine--tRNA ligase, cytoplasmic (860 aa).

A 'HIGH' region motif is present at residues 41–51 (PYMNGKLHLGH). The 'KMSKS' region signature appears at 552-556 (KMSKS). Lysine 555 contributes to the ATP binding site.

This sequence belongs to the class-I aminoacyl-tRNA synthetase family.

Its subcellular location is the cytoplasm. The catalysed reaction is tRNA(Leu) + L-leucine + ATP = L-leucyl-tRNA(Leu) + AMP + diphosphate. This Enterocytozoon bieneusi (strain H348) (Microsporidian parasite) protein is Probable leucine--tRNA ligase, cytoplasmic.